An 86-amino-acid polypeptide reads, in one-letter code: YcgL domain-containing protein XC_4086 (86 aa).

A YcgL domain is found at 1-83; sequence MHAYVYKSQR…PKTVVLAGEC (83 aa).

The protein is YcgL domain-containing protein XC_4086 of Xanthomonas campestris pv. campestris (strain 8004).